Reading from the N-terminus, the 39-residue chain is Photosystem II reaction center protein L (39 aa).

A helical membrane pass occupies residues 18-38; sequence SLYLGLLLVAVLGILFSSYFF.

Belongs to the PsbL family. As to quaternary structure, PSII is composed of 1 copy each of membrane proteins PsbA, PsbB, PsbC, PsbD, PsbE, PsbF, PsbH, PsbI, PsbJ, PsbK, PsbL, PsbM, PsbT, PsbX, PsbY, PsbZ, Psb30/Ycf12, peripheral proteins PsbO, CyanoQ (PsbQ), PsbU, PsbV and a large number of cofactors. It forms dimeric complexes.

The protein resides in the cellular thylakoid membrane. Functionally, one of the components of the core complex of photosystem II (PSII). PSII is a light-driven water:plastoquinone oxidoreductase that uses light energy to abstract electrons from H(2)O, generating O(2) and a proton gradient subsequently used for ATP formation. It consists of a core antenna complex that captures photons, and an electron transfer chain that converts photonic excitation into a charge separation. This subunit is found at the monomer-monomer interface and is required for correct PSII assembly and/or dimerization. In Rippkaea orientalis (strain PCC 8801 / RF-1) (Cyanothece sp. (strain PCC 8801)), this protein is Photosystem II reaction center protein L.